The sequence spans 743 residues: Amylovoran biosynthesis protein AmsF (743 aa).

Positions 1-27 (MKRRELIRTAFSTIVATAALSSVSARA) are cleaved as a signal peptide.

The protein to R.meliloti ExoP.

Its subcellular location is the periplasm. Its pathway is glycan metabolism; exopolysaccharide biosynthesis. Involved in the biosynthesis of amylovoran which functions as a virulence factor. May be involved in the polymerization or late modification of the repeating units. In Erwinia amylovora (Fire blight bacteria), this protein is Amylovoran biosynthesis protein AmsF (amsF).